A 451-amino-acid chain; its full sequence is Trigger factor (451 aa).

A PPIase FKBP-type domain is found at 162 to 243 (GDYAIIDITT…VQQSKERKLP (82 aa)).

The protein belongs to the FKBP-type PPIase family. Tig subfamily.

Its subcellular location is the cytoplasm. The catalysed reaction is [protein]-peptidylproline (omega=180) = [protein]-peptidylproline (omega=0). In terms of biological role, involved in protein export. Acts as a chaperone by maintaining the newly synthesized protein in an open conformation. Functions as a peptidyl-prolyl cis-trans isomerase. In Corynebacterium aurimucosum (strain ATCC 700975 / DSM 44827 / CIP 107346 / CN-1) (Corynebacterium nigricans), this protein is Trigger factor.